The sequence spans 67 residues: uncharacterized protein (67 aa).

A coiled-coil region spans residues 17-47 (AASLQELEKKINTQIENNKAIMLRVKSVSHQ).

This is an uncharacterized protein from Bacillus subtilis (strain 168).